Here is a 442-residue protein sequence, read N- to C-terminus: Protein bangles and beads (442 aa).

A disordered region spans residues 47–442; it reads AVEPAPLKPE…SEESSESKEN (396 aa). 3 stretches are compositionally biased toward basic and acidic residues: residues 55-67, 114-125, and 133-146; these read PEAE…KTIE, PEKKTLPEEAKP, and EAEK…RTEA. Positions 159–172 are enriched in low complexity; that stretch reads AIEQAPEAPAANAE. 2 stretches are compositionally biased toward basic and acidic residues: residues 177-194 and 204-240; these read VVDE…KSAE and AEKE…EPAK. Low complexity-rich tracts occupy residues 241–255 and 272–288; these read AAEA…AATK and SSPA…AAQA. Basic and acidic residues predominate over residues 329 to 339; it reads EAVKEQEKEQP. The span at 357-376 shows a compositional bias: low complexity; the sequence is TAAPAGAPEPTAAVAPAAVP. Over residues 408–442 the composition is skewed to basic and acidic residues; it reads EPKKSSEEKSDKSESKVDESSESKESEESSESKEN. S430, S433, S436, and S437 each carry phosphoserine.

Expressed in the embryonic CNS, in sets of cells that are segmentally reiterated along the periphery of the nervous system.

May play an important role during development. This chain is Protein bangles and beads (bnb), found in Drosophila melanogaster (Fruit fly).